A 420-amino-acid chain; its full sequence is Phosphoglycerate kinase, cytosolic (420 aa).

The (2R)-3-phosphoglycerate site is built by Val23, Asp24, Phe25, Asn26, Arg39, Ser61, His62, Gly64, Arg65, Arg135, His171, and Arg172. Gly217 serves as a coordination point for ADP. Gly217 contributes to the CDP binding site. Position 219 (Lys219) interacts with (2R)-3-phosphoglycerate. Residue Lys219 participates in AMP binding. Asp222 provides a ligand contact to CDP. Asp222 contributes to the Mg(2+) binding site. Residues Lys223 and Gly241 each contribute to the ADP site. Lys223 lines the AMP pocket. Lys223 is an ATP binding site. A CDP-binding site is contributed by Gly241. Residues Ala242 and Ala314 each coordinate AMP. Residues Ala242 and Ala314 each contribute to the ATP site. ADP is bound by residues Ala314 and Asn338. Residues Gly339 and Phe344 each contribute to the CDP site. ADP contacts are provided by Phe344, Glu345, Asp377, and Ser378. Residue Glu345 coordinates AMP. Glu345, Asp377, and Ser378 together coordinate ATP. Mg(2+) is bound at residue Asp377.

The protein belongs to the phosphoglycerate kinase family. In terms of assembly, monomer. Mg(2+) serves as cofactor.

It localises to the cytoplasm. The enzyme catalyses (2R)-3-phosphoglycerate + ATP = (2R)-3-phospho-glyceroyl phosphate + ADP. It functions in the pathway carbohydrate degradation; glycolysis; pyruvate from D-glyceraldehyde 3-phosphate: step 2/5. This is Phosphoglycerate kinase, cytosolic (C1PGK) from Trypanosoma congolense.